Reading from the N-terminus, the 378-residue chain is Succinate--CoA ligase [ADP-forming] subunit beta (378 aa).

Residues 9 to 237 (RDIVARYGIP…IAGEPESEIK (229 aa)) form the ATP-grasp domain. Residues Lys-45, 52–54 (GRG), Ile-94, and Glu-99 each bind ATP. Mg(2+) contacts are provided by Asn-192 and Asp-206. Residues Asn-257 and 314–316 (GIT) contribute to the substrate site.

This sequence belongs to the succinate/malate CoA ligase beta subunit family. Heterotetramer of two alpha and two beta subunits. Requires Mg(2+) as cofactor.

It carries out the reaction succinate + ATP + CoA = succinyl-CoA + ADP + phosphate. The catalysed reaction is GTP + succinate + CoA = succinyl-CoA + GDP + phosphate. Its pathway is carbohydrate metabolism; tricarboxylic acid cycle; succinate from succinyl-CoA (ligase route): step 1/1. In terms of biological role, succinyl-CoA synthetase functions in the citric acid cycle (TCA), coupling the hydrolysis of succinyl-CoA to the synthesis of either ATP or GTP and thus represents the only step of substrate-level phosphorylation in the TCA. The beta subunit provides nucleotide specificity of the enzyme and binds the substrate succinate, while the binding sites for coenzyme A and phosphate are found in the alpha subunit. The polypeptide is Succinate--CoA ligase [ADP-forming] subunit beta (Herpetosiphon aurantiacus (strain ATCC 23779 / DSM 785 / 114-95)).